The sequence spans 151 residues: Lipoprotein signal peptidase (151 aa).

3 helical membrane-spanning segments follow: residues 33–53, 58–78, and 87–107; these read VIPD…FGLL, WIFI…QFKI, and LTLG…LFIG. Catalysis depends on residues Asp111 and Asp126. A helical transmembrane segment spans residues 120–140; the sequence is FVFNFADSAIVVGVGLLMILM.

This sequence belongs to the peptidase A8 family.

It localises to the cell membrane. The catalysed reaction is Release of signal peptides from bacterial membrane prolipoproteins. Hydrolyzes -Xaa-Yaa-Zaa-|-(S,diacylglyceryl)Cys-, in which Xaa is hydrophobic (preferably Leu), and Yaa (Ala or Ser) and Zaa (Gly or Ala) have small, neutral side chains.. Its pathway is protein modification; lipoprotein biosynthesis (signal peptide cleavage). This protein specifically catalyzes the removal of signal peptides from prolipoproteins. This Desulfitobacterium hafniense (strain DSM 10664 / DCB-2) protein is Lipoprotein signal peptidase.